The sequence spans 139 residues: Putative nickel-responsive regulator (139 aa).

The Ni(2+) site is built by His-79, His-90, His-92, and Cys-98.

Belongs to the transcriptional regulatory CopG/NikR family. Ni(2+) is required as a cofactor.

Its function is as follows. Transcriptional regulator. The chain is Putative nickel-responsive regulator from Geotalea uraniireducens (strain Rf4) (Geobacter uraniireducens).